The primary structure comprises 3685 residues: Dystrophin (3685 aa).

The interval 1-240 is actin-binding; it reads MLWWEEVEDC…YITSLFQVLP (240 aa). Calponin-homology (CH) domains lie at 15-119 and 134-240; these read DVQK…LHWQ and TNSE…QVLP. An ANK2- and ANK-3 binding region spans residues 63 to 72; the sequence is PKEKGSTRVH. Spectrin repeat units follow at residues 339 to 447, 448 to 556, 559 to 667, 719 to 828, 830 to 934, 943 to 1045, 1048 to 1154, 1157 to 1263, 1266 to 1367, 1368 to 1463, 1468 to 1568, 1571 to 1676, 1679 to 1778, 1779 to 1874, 1877 to 1979, 1992 to 2101, 2104 to 2208, 2211 to 2318, 2319 to 2423, 2475 to 2577, 2580 to 2686, 2689 to 2802, 2808 to 2930, and 2935 to 3040; these read VNLD…NLHR, VLMD…LLQD, LKWQ…QISQ, EIRK…WLEY, NNII…ELQT, RYQE…KLEE, NKLR…ALKG, EKTV…TLEE, ACWH…LLEQ, SIQS…LFQK, EQRL…QLEK, KLSR…LLLE, KHME…KASI, PLKE…KALE, HQWY…TVRE, EISY…RFDR, EKWR…RLEE, NILS…EIEA, QIKD…LRAK, FNRA…QLNE, KDST…ALEE, RLLQ…HLEA, KRLH…RKID, and RLRE…QLHE. Asn-340 carries the phosphothreonine modification. Phosphoserine occurs at positions 344 and 348. Phosphothreonine occurs at positions 519, 616, and 629. An interaction with SYNM region spans residues 1415 to 1913; that stretch reads SDLTSHEISL…PEPRDERKIK (499 aa). The region spanning 3055 to 3088 is the WW domain; it reads TSVQGPWERAISPNKVPYYINHETQTTCWDHPKM. Residues 3058-3408 are interaction with SYNM; it reads QGPWERAISP…TVLEGDNMET (351 aa). The segment at 3308-3364 adopts a ZZ-type; degenerate zinc-finger fold; that stretch reads KHQAKCNICKECPIIGFRYRSLKHFNYDICQSCFFSGRVAKGHKMHYPMVEYCTPTT. The Zn(2+) site is built by Cys-3313, Cys-3316, Cys-3337, and Cys-3340. A binds to SNTB1 region spans residues 3466–3518; it reads DDEHLLIQHYCQSLNQDSPLSQPRSPAQILISLESEERGELERILADLEEENR. Phosphoserine is present on residues Ser-3483, Ser-3490, and Ser-3500. Disordered regions lie at residues 3528–3554 and 3603–3685; these read KQQH…QSPR and EAKV…EDTM. Composition is skewed to polar residues over residues 3607–3626 and 3662–3673; these read NGTT…SSQP and QLNNSFPSSRGR. 6 positions are modified to phosphoserine: Ser-3612, Ser-3613, Ser-3617, Ser-3623, Ser-3624, and Ser-3666.

As to quaternary structure, interacts with SYNM. Interacts with the syntrophins SNTA1, SNTB1, SNTB2, SNTG1 and SNTG2. Interacts with KRT19. Component of the dystrophin-associated glycoprotein complex which is composed of three subcomplexes: a cytoplasmic complex comprised of DMD (or UTRN), DTNA and a number of syntrophins, such as SNTB1, SNTB2, SNTG1 and SNTG2, the transmembrane dystroglycan complex, and the sarcoglycan-sarcospan complex. Interacts with DAG1 (betaDAG1) with DMD; the interaction is inhibited by phosphorylation on the PPXY motif of DAG1. Interacts with CMYA5. Directly interacts with ANK2 and ANK3; these interactions do not interfere with betaDAG1-binding and are necessary for proper localization in muscle cells. Identified in a dystroglycan complex that contains at least PRX, DRP2, UTRN, DMD and DAG1. Interacts with DTNB. Interacts with PGM5; the interaction is direct. Interacts with NOS1; localizes NOS1 to sarcolemma in muscle cells. Expressed in muscle fibers accumulating in the costameres of myoplasm at the sarcolemma. Expressed in brain, muscle, kidney, lung and testis. Most tissues contain transcripts of multiple isoforms. Isoform 15: Only isoform to be detected in heart and liver and is also expressed in brain, testis and hepatoma cells.

The protein localises to the cell membrane. Its subcellular location is the sarcolemma. The protein resides in the cytoplasm. It localises to the cytoskeleton. It is found in the postsynaptic cell membrane. Anchors the extracellular matrix to the cytoskeleton via F-actin. Ligand for dystroglycan. Component of the dystrophin-associated glycoprotein complex which accumulates at the neuromuscular junction (NMJ) and at a variety of synapses in the peripheral and central nervous systems and has a structural function in stabilizing the sarcolemma. Also implicated in signaling events and synaptic transmission. This Homo sapiens (Human) protein is Dystrophin.